A 504-amino-acid polypeptide reads, in one-letter code: Probable cytosol aminopeptidase (504 aa).

Mn(2+) contacts are provided by K274 and D279. K286 is an active-site residue. D297, D356, and E358 together coordinate Mn(2+). The active site involves R360.

Belongs to the peptidase M17 family. The cofactor is Mn(2+).

Its subcellular location is the cytoplasm. It carries out the reaction Release of an N-terminal amino acid, Xaa-|-Yaa-, in which Xaa is preferably Leu, but may be other amino acids including Pro although not Arg or Lys, and Yaa may be Pro. Amino acid amides and methyl esters are also readily hydrolyzed, but rates on arylamides are exceedingly low.. The catalysed reaction is Release of an N-terminal amino acid, preferentially leucine, but not glutamic or aspartic acids.. In terms of biological role, presumably involved in the processing and regular turnover of intracellular proteins. Catalyzes the removal of unsubstituted N-terminal amino acids from various peptides. The protein is Probable cytosol aminopeptidase of Blochmanniella floridana.